Reading from the N-terminus, the 199-residue chain is Large ribosomal subunit protein bL9 (199 aa).

Positions 149-166 (AEAERINRGEDINSRQED) are enriched in basic and acidic residues. The segment at 149 to 199 (AEAERINRGEDINSRQEDQDAAAEAIAAAGEFFDPEAQDETPETEAASEQQ) is disordered. Acidic residues predominate over residues 181–191 (FDPEAQDETPE).

The protein belongs to the bacterial ribosomal protein bL9 family.

Its function is as follows. Binds to the 23S rRNA. This chain is Large ribosomal subunit protein bL9, found in Afipia carboxidovorans (strain ATCC 49405 / DSM 1227 / KCTC 32145 / OM5) (Oligotropha carboxidovorans).